Consider the following 378-residue polypeptide: Putative glutamate--cysteine ligase 2 (378 aa).

Belongs to the glutamate--cysteine ligase type 2 family. YbdK subfamily.

It catalyses the reaction L-cysteine + L-glutamate + ATP = gamma-L-glutamyl-L-cysteine + ADP + phosphate + H(+). In terms of biological role, ATP-dependent carboxylate-amine ligase which exhibits weak glutamate--cysteine ligase activity. The protein is Putative glutamate--cysteine ligase 2 of Bdellovibrio bacteriovorus (strain ATCC 15356 / DSM 50701 / NCIMB 9529 / HD100).